Reading from the N-terminus, the 442-residue chain is Shufflon protein B (442 aa).

The tract at residues 1-361 is constant region; sequence MKKYDRGWAS…TGAILSCQSG (361 aa). Positions 362 to 442 are variable region; that stretch reads TWKSSSASIW…SYFMKITCLK (81 aa).

The polypeptide is Shufflon protein B (Escherichia coli).